The chain runs to 262 residues: Pyridoxine 5'-phosphate synthase (262 aa).

Asn6 is a 3-amino-2-oxopropyl phosphate binding site. 8–9 (DH) contributes to the 1-deoxy-D-xylulose 5-phosphate binding site. Position 17 (Arg17) interacts with 3-amino-2-oxopropyl phosphate. His43 acts as the Proton acceptor in catalysis. Arg45 and His50 together coordinate 1-deoxy-D-xylulose 5-phosphate. Glu70 functions as the Proton acceptor in the catalytic mechanism. Thr102 contacts 1-deoxy-D-xylulose 5-phosphate. His215 functions as the Proton donor in the catalytic mechanism. Residues Gly216 and 237–238 (GH) each bind 3-amino-2-oxopropyl phosphate.

It belongs to the PNP synthase family. In terms of assembly, homooctamer; tetramer of dimers.

It is found in the cytoplasm. It carries out the reaction 3-amino-2-oxopropyl phosphate + 1-deoxy-D-xylulose 5-phosphate = pyridoxine 5'-phosphate + phosphate + 2 H2O + H(+). The protein operates within cofactor biosynthesis; pyridoxine 5'-phosphate biosynthesis; pyridoxine 5'-phosphate from D-erythrose 4-phosphate: step 5/5. Catalyzes the complicated ring closure reaction between the two acyclic compounds 1-deoxy-D-xylulose-5-phosphate (DXP) and 3-amino-2-oxopropyl phosphate (1-amino-acetone-3-phosphate or AAP) to form pyridoxine 5'-phosphate (PNP) and inorganic phosphate. In Helicobacter pylori (strain ATCC 700392 / 26695) (Campylobacter pylori), this protein is Pyridoxine 5'-phosphate synthase.